The sequence spans 644 residues: Acetyl-coenzyme A synthetase (644 aa).

CoA-binding positions include 189 to 192 (RGGK) and threonine 307. ATP contacts are provided by residues 383 to 385 (GEP), 407 to 412 (DTWWQT), aspartate 496, and arginine 511. Residue serine 519 coordinates CoA. Arginine 522 contacts ATP. Residues valine 533, histidine 535, and valine 538 each coordinate Mg(2+). CoA is bound at residue arginine 580. Lysine 605 carries the N6-acetyllysine modification.

Belongs to the ATP-dependent AMP-binding enzyme family. It depends on Mg(2+) as a cofactor. Acetylated. Deacetylation by the SIR2-homolog deacetylase activates the enzyme.

The enzyme catalyses acetate + ATP + CoA = acetyl-CoA + AMP + diphosphate. Its function is as follows. Catalyzes the conversion of acetate into acetyl-CoA (AcCoA), an essential intermediate at the junction of anabolic and catabolic pathways. AcsA undergoes a two-step reaction. In the first half reaction, AcsA combines acetate with ATP to form acetyl-adenylate (AcAMP) intermediate. In the second half reaction, it can then transfer the acetyl group from AcAMP to the sulfhydryl group of CoA, forming the product AcCoA. This is Acetyl-coenzyme A synthetase from Rubrobacter xylanophilus (strain DSM 9941 / JCM 11954 / NBRC 16129 / PRD-1).